The chain runs to 389 residues: Protein CysO (389 aa).

Lys-127 carries the N6-(pyridoxal phosphate)lysine modification. Pyridoxal 5'-phosphate-binding positions include Asn-155, 261–265, and Ser-341; that span reads GTSGH.

This sequence belongs to the cysteine synthase/cystathionine beta-synthase family. In terms of assembly, homodimer. The cofactor is pyridoxal 5'-phosphate.

The catalysed reaction is O-acetyl-L-serine + hydrogen sulfide = L-cysteine + acetate. It carries out the reaction O-phospho-L-serine + hydrogen sulfide + H(+) = L-cysteine + phosphate. It catalyses the reaction L-homocysteine + L-serine = L,L-cystathionine + H2O. Its pathway is amino-acid biosynthesis; L-cysteine biosynthesis; L-cysteine from L-serine: step 2/2. Cysteine synthase that can also catalyze the synthesis of S-sulfo-L-cysteine from thiosulfate and O(3)-acetyl-L-serine, as well as the sulfhydrylation of L-serine by sulfide. The polypeptide is Protein CysO (cysO) (Aeropyrum pernix (strain ATCC 700893 / DSM 11879 / JCM 9820 / NBRC 100138 / K1)).